A 443-amino-acid chain; its full sequence is Palmitoyltransferase pfa5 (443 aa).

The next 2 helical transmembrane spans lie at 17–37 (IIPP…TKPL) and 57–77 (AGAA…ATYL). Residues 96–137 (CTQNQTGSDGSKHRHRRHRRRKSGHHLSKTTEKTDRSDGGDV) are disordered. Residues 107–123 (KHRHRRHRRRKSGHHLS) show a composition bias toward basic residues. Basic and acidic residues predominate over residues 124–137 (KTTEKTDRSDGGDV). The DHHC domain maps to 175 to 225 (VYCSTCCQFKTDRAHHCREVDRCVRKMDHFCPWVGGVVSETSFKFFIQFIV). 2 helical membrane-spanning segments follow: residues 220–240 (FIQF…VFAI) and 256–276 (WIVC…VAIS). The interval 410 to 443 (AGLEVSTESESADPVGAAETPQHEQRRGKHRRRN) is disordered.

This sequence belongs to the DHHC palmitoyltransferase family. PFA5 subfamily. Post-translationally, autopalmitoylated.

It localises to the membrane. It catalyses the reaction L-cysteinyl-[protein] + hexadecanoyl-CoA = S-hexadecanoyl-L-cysteinyl-[protein] + CoA. The polypeptide is Palmitoyltransferase pfa5 (pfa5) (Aspergillus fumigatus (strain ATCC MYA-4609 / CBS 101355 / FGSC A1100 / Af293) (Neosartorya fumigata)).